A 381-amino-acid chain; its full sequence is tRNA (guanine(26)-N(2))-dimethyltransferase (381 aa).

The 372-residue stretch at 7 to 378 (IEVQEGKAKI…APYEVFIETI (372 aa)) folds into the Trm1 methyltransferase domain. Residues R39, R64, D81, D123, and A124 each contribute to the S-adenosyl-L-methionine site.

The protein belongs to the class I-like SAM-binding methyltransferase superfamily. Trm1 family.

It catalyses the reaction guanosine(26) in tRNA + 2 S-adenosyl-L-methionine = N(2)-dimethylguanosine(26) in tRNA + 2 S-adenosyl-L-homocysteine + 2 H(+). In terms of biological role, dimethylates a single guanine residue at position 26 of a number of tRNAs using S-adenosyl-L-methionine as donor of the methyl groups. This is tRNA (guanine(26)-N(2))-dimethyltransferase from Pyrococcus horikoshii (strain ATCC 700860 / DSM 12428 / JCM 9974 / NBRC 100139 / OT-3).